The following is a 596-amino-acid chain: Bromodomain-containing protein 9 (596 aa).

Basic residues predominate over residues 1–10 (MGKKHKKHKA). 2 disordered regions span residues 1-26 (MGKKHKKHKAEWRSSYEDYTDTPLEK) and 38-137 (EVTE…AENE). Positions 50–62 (SYYDDRSDHERER) are enriched in basic and acidic residues. Ser56 is modified (phosphoserine). Over residues 63–73 (HREKKKKKKKK) the composition is skewed to basic residues. Residues 74–85 (SEKEKHLDEEER) are compositionally biased toward basic and acidic residues. Basic residues predominate over residues 86 to 97 (RKRKEEKKRKRE). Positions 111–126 (DPGKKVEVEPPPDRPV) are enriched in basic and acidic residues. The 105-residue stretch at 136–240 (NESTPIQRLL…HAGFKMMSKA (105 aa)) folds into the Bromo domain. The interval 214–216 (TYN) is histone H4K5ac H4K8ac and histone H4K5bu H4K8bu binding. Lys372 bears the N6-acetyllysine; alternate mark. Residue Lys372 forms a Glycyl lysine isopeptide (Lys-Gly) (interchain with G-Cter in SUMO2); alternate linkage. The interval 536–596 (AQAERGGSRP…SPEPAAPAKN (61 aa)) is disordered. Residues 543-555 (SRPSSNLSSLSTA) are compositionally biased toward low complexity. Residues Ser565 and Ser587 each carry the phosphoserine modification.

As to quaternary structure, binds acetylated histones H3 and H4. Binds butyrylated histone H4. Component of the multiprotein chromatin-remodeling subcomplex SWI/SNF called GBAF, which includes at least BICRA or BICRAL (mutually exclusive), BRD9, SS18, the core BAF subunits, SMARCA2/BRM, SMARCA4/BRG1/BAF190A, ACTL6A/BAF53, SMARCC1/BAF155, and SMARCD1/BAF60A. Interacts (via N-terminal bromodomain) with acetylated RAD54. Interacts (via C-terminus) with RAD51.

Its subcellular location is the nucleus. Plays a role in chromatin remodeling and regulation of transcription. Acts as a chromatin reader that recognizes and binds acylated histones: binds histones that are acetylated and/or butyrylated. Component of SWI/SNF chromatin remodeling subcomplex GBAF that carries out key enzymatic activities, changing chromatin structure by altering DNA-histone contacts within a nucleosome in an ATP-dependent manner. Also orchestrates the RAD51-RAD54 complex formation and thereby plays a role in homologous recombination (HR). This chain is Bromodomain-containing protein 9 (Brd9), found in Mus musculus (Mouse).